We begin with the raw amino-acid sequence, 314 residues long: Aspartate carbamoyltransferase catalytic subunit (314 aa).

Positions 55 and 56 each coordinate carbamoyl phosphate. Residue Lys83 coordinates L-aspartate. The carbamoyl phosphate site is built by Arg105, His134, and Gln137. L-aspartate contacts are provided by Arg167 and Arg221. Carbamoyl phosphate is bound by residues Gly262 and Pro263.

This sequence belongs to the aspartate/ornithine carbamoyltransferase superfamily. ATCase family. In terms of assembly, heterododecamer (2C3:3R2) of six catalytic PyrB chains organized as two trimers (C3), and six regulatory PyrI chains organized as three dimers (R2).

It catalyses the reaction carbamoyl phosphate + L-aspartate = N-carbamoyl-L-aspartate + phosphate + H(+). It participates in pyrimidine metabolism; UMP biosynthesis via de novo pathway; (S)-dihydroorotate from bicarbonate: step 2/3. Its function is as follows. Catalyzes the condensation of carbamoyl phosphate and aspartate to form carbamoyl aspartate and inorganic phosphate, the committed step in the de novo pyrimidine nucleotide biosynthesis pathway. The sequence is that of Aspartate carbamoyltransferase catalytic subunit from Corynebacterium urealyticum (strain ATCC 43042 / DSM 7109).